A 211-amino-acid chain; its full sequence is 7-carboxy-7-deazaguanine synthase (211 aa).

Substrate contacts are provided by residues 22–24 (LQG) and arginine 37. One can recognise a Radical SAM core domain in the interval 28 to 211 (NTGMPSVFVR…LQTHKLIGIE (184 aa)). Cysteine 41, cysteine 45, and cysteine 48 together coordinate [4Fe-4S] cluster. Threonine 50 is a binding site for Mg(2+). Threonine 78 lines the substrate pocket. S-adenosyl-L-methionine is bound by residues glycine 80 and 122-124 (SPK).

Belongs to the radical SAM superfamily. 7-carboxy-7-deazaguanine synthase family. Homodimer. It depends on [4Fe-4S] cluster as a cofactor. S-adenosyl-L-methionine serves as cofactor. Mg(2+) is required as a cofactor.

The catalysed reaction is 6-carboxy-5,6,7,8-tetrahydropterin + H(+) = 7-carboxy-7-deazaguanine + NH4(+). It functions in the pathway purine metabolism; 7-cyano-7-deazaguanine biosynthesis. Its function is as follows. Catalyzes the complex heterocyclic radical-mediated conversion of 6-carboxy-5,6,7,8-tetrahydropterin (CPH4) to 7-carboxy-7-deazaguanine (CDG), a step common to the biosynthetic pathways of all 7-deazapurine-containing compounds. The chain is 7-carboxy-7-deazaguanine synthase from Haemophilus influenzae (strain ATCC 51907 / DSM 11121 / KW20 / Rd).